A 468-amino-acid polypeptide reads, in one-letter code: Proline--tRNA ligase (468 aa).

Belongs to the class-II aminoacyl-tRNA synthetase family. ProS type 3 subfamily. As to quaternary structure, homodimer.

The protein localises to the cytoplasm. It catalyses the reaction tRNA(Pro) + L-proline + ATP = L-prolyl-tRNA(Pro) + AMP + diphosphate. Functionally, catalyzes the attachment of proline to tRNA(Pro) in a two-step reaction: proline is first activated by ATP to form Pro-AMP and then transferred to the acceptor end of tRNA(Pro). The polypeptide is Proline--tRNA ligase (Frankia casuarinae (strain DSM 45818 / CECT 9043 / HFP020203 / CcI3)).